A 562-amino-acid chain; its full sequence is Probable Xaa-Pro aminopeptidase PEPP (562 aa).

Residues aspartate 358, aspartate 369, glutamate 492, and glutamate 532 each contribute to the Mn(2+) site.

The protein belongs to the peptidase M24B family. Mn(2+) is required as a cofactor.

It carries out the reaction Release of any N-terminal amino acid, including proline, that is linked to proline, even from a dipeptide or tripeptide.. In terms of biological role, catalyzes the removal of a penultimate prolyl residue from the N-termini of peptides. The protein is Probable Xaa-Pro aminopeptidase PEPP (PEPP) of Leptosphaeria maculans (strain JN3 / isolate v23.1.3 / race Av1-4-5-6-7-8) (Blackleg fungus).